We begin with the raw amino-acid sequence, 415 residues long: Serine hydroxymethyltransferase 3 (415 aa).

(6S)-5,6,7,8-tetrahydrofolate contacts are provided by residues Leu122 and 126–128 (GHL). Residue Lys230 is modified to N6-(pyridoxal phosphate)lysine.

This sequence belongs to the SHMT family. Homodimer. Pyridoxal 5'-phosphate serves as cofactor.

The protein localises to the cytoplasm. The enzyme catalyses (6R)-5,10-methylene-5,6,7,8-tetrahydrofolate + glycine + H2O = (6S)-5,6,7,8-tetrahydrofolate + L-serine. The protein operates within one-carbon metabolism; tetrahydrofolate interconversion. It functions in the pathway amino-acid biosynthesis; glycine biosynthesis; glycine from L-serine: step 1/1. Catalyzes the reversible interconversion of serine and glycine with tetrahydrofolate (THF) serving as the one-carbon carrier. This reaction serves as the major source of one-carbon groups required for the biosynthesis of purines, thymidylate, methionine, and other important biomolecules. Also exhibits THF-independent aldolase activity toward beta-hydroxyamino acids, producing glycine and aldehydes, via a retro-aldol mechanism. The chain is Serine hydroxymethyltransferase 3 from Burkholderia lata (strain ATCC 17760 / DSM 23089 / LMG 22485 / NCIMB 9086 / R18194 / 383).